The following is a 152-amino-acid chain: MRRIVAGKLHGIYVTDANLNYHGSITLDPDHCEEAGILPMEFVEIWNKNSGARISTYVILGERGSRCCILNGAAARTCQPGDQIIICNSIYIRESELPDIRPRVLTFDSDNRVLDRLEYIVKFDDFGRYRFAIERARSLNHASIAGEPKTVA.

The active-site Schiff-base intermediate with substrate; via pyruvic acid is Ser-24. Ser-24 carries the post-translational modification Pyruvic acid (Ser). Thr-56 contributes to the substrate binding site. Tyr-57 functions as the Proton donor in the catalytic mechanism. Gly-72 to Ala-74 provides a ligand contact to substrate.

Belongs to the PanD family. As to quaternary structure, heterooctamer of four alpha and four beta subunits. Pyruvate is required as a cofactor. Post-translationally, is synthesized initially as an inactive proenzyme, which is activated by self-cleavage at a specific serine bond to produce a beta-subunit with a hydroxyl group at its C-terminus and an alpha-subunit with a pyruvoyl group at its N-terminus.

It localises to the cytoplasm. It catalyses the reaction L-aspartate + H(+) = beta-alanine + CO2. It functions in the pathway cofactor biosynthesis; (R)-pantothenate biosynthesis; beta-alanine from L-aspartate: step 1/1. Functionally, catalyzes the pyruvoyl-dependent decarboxylation of aspartate to produce beta-alanine. This is Aspartate 1-decarboxylase from Methylobacterium nodulans (strain LMG 21967 / CNCM I-2342 / ORS 2060).